Reading from the N-terminus, the 534-residue chain is Benzaldehyde dehydrogenase, mitochondrial (534 aa).

A mitochondrion-targeting transit peptide spans 1–29; it reads MAAHRFSSLLSRSVPLLSRGGKQSYLGRG. Residues 199 to 202, 225 to 228, 258 to 259, 278 to 279, and 301 to 303 each bind NAD(+); these read IPWN, KTAE, GP, GS, and ELG. The Proton acceptor role is filled by Glu301. Catalysis depends on Cys335, which acts as the Nucleophile. Residues 381 to 385 and 432 to 434 each bind NAD(+); these read DQFEK and EIF.

This sequence belongs to the aldehyde dehydrogenase family. In terms of assembly, homotetramer. Expressed predominantly in the upper and lower flower petal lobes, and, at low levels, in flower tubes, pistils, stamens and sepals.

It is found in the mitochondrion. The enzyme catalyses an aldehyde + NAD(+) + H2O = a carboxylate + NADH + 2 H(+). The catalysed reaction is acetaldehyde + NAD(+) + H2O = acetate + NADH + 2 H(+). It catalyses the reaction benzaldehyde + NAD(+) + H2O = benzoate + NADH + 2 H(+). It carries out the reaction 2-phenylacetaldehyde + NAD(+) + H2O = 2-phenylacetate + NADH + 2 H(+). The protein operates within aromatic compound metabolism. Its activity is regulated as follows. Inhibited by disulfiram. In terms of biological role, component of the floral volatile benzenoid/phenylpropanoid (FVBP) biosynthetic pathway. Catalyzes the oxidation of benzaldehyde to benzoic acid (BA). Capable of oxidizing a broad spectrum of aliphatic aldehydes; increased carbon chain length results in a decrease in its efficiency. In Antirrhinum majus (Garden snapdragon), this protein is Benzaldehyde dehydrogenase, mitochondrial.